We begin with the raw amino-acid sequence, 123 residues long: Fluoride-specific ion channel FluC 2 (123 aa).

Transmembrane regions (helical) follow at residues 3–23 (LDGF…RMFI), 38–58 (ILIV…LNIT), 62–82 (LILF…SFIY), and 94–114 (LILL…FCLG). Positions 72 and 75 each coordinate Na(+).

It belongs to the fluoride channel Fluc/FEX (TC 1.A.43) family.

It is found in the cell inner membrane. The enzyme catalyses fluoride(in) = fluoride(out). With respect to regulation, na(+) is not transported, but it plays an essential structural role and its presence is essential for fluoride channel function. Functionally, fluoride-specific ion channel. Important for reducing fluoride concentration in the cell, thus reducing its toxicity. This chain is Fluoride-specific ion channel FluC 2, found in Prochlorococcus marinus subsp. pastoris (strain CCMP1986 / NIES-2087 / MED4).